Reading from the N-terminus, the 219-residue chain is Thiamine-phosphate synthase (219 aa).

4-amino-2-methyl-5-(diphosphooxymethyl)pyrimidine is bound by residues 48-52 (QFRQK) and Asn84. 2 residues coordinate Mg(2+): Asp85 and Asp104. Ser123 provides a ligand contact to 4-amino-2-methyl-5-(diphosphooxymethyl)pyrimidine. 150 to 152 (TQS) provides a ligand contact to 2-[(2R,5Z)-2-carboxy-4-methylthiazol-5(2H)-ylidene]ethyl phosphate. Residue Lys153 coordinates 4-amino-2-methyl-5-(diphosphooxymethyl)pyrimidine. 2-[(2R,5Z)-2-carboxy-4-methylthiazol-5(2H)-ylidene]ethyl phosphate is bound by residues Gly181 and 199–200 (IS).

The protein belongs to the thiamine-phosphate synthase family. Mg(2+) is required as a cofactor.

It catalyses the reaction 2-[(2R,5Z)-2-carboxy-4-methylthiazol-5(2H)-ylidene]ethyl phosphate + 4-amino-2-methyl-5-(diphosphooxymethyl)pyrimidine + 2 H(+) = thiamine phosphate + CO2 + diphosphate. The enzyme catalyses 2-(2-carboxy-4-methylthiazol-5-yl)ethyl phosphate + 4-amino-2-methyl-5-(diphosphooxymethyl)pyrimidine + 2 H(+) = thiamine phosphate + CO2 + diphosphate. The catalysed reaction is 4-methyl-5-(2-phosphooxyethyl)-thiazole + 4-amino-2-methyl-5-(diphosphooxymethyl)pyrimidine + H(+) = thiamine phosphate + diphosphate. The protein operates within cofactor biosynthesis; thiamine diphosphate biosynthesis; thiamine phosphate from 4-amino-2-methyl-5-diphosphomethylpyrimidine and 4-methyl-5-(2-phosphoethyl)-thiazole: step 1/1. In terms of biological role, condenses 4-methyl-5-(beta-hydroxyethyl)thiazole monophosphate (THZ-P) and 2-methyl-4-amino-5-hydroxymethyl pyrimidine pyrophosphate (HMP-PP) to form thiamine monophosphate (TMP). This is Thiamine-phosphate synthase from Helicobacter pylori (strain Shi470).